A 276-amino-acid chain; its full sequence is Cell wall synthesis protein KRE9 (276 aa).

The first 21 residues, 1–21 (MRLQRNSIICALVFLVSFVLG), serve as a signal peptide directing secretion.

This sequence belongs to the KRE9/KNH1 family. Post-translationally, O-glycosylated.

The protein localises to the secreted. Its subcellular location is the cell wall. Its function is as follows. Involved in cell wall beta(1-&gt;6) glucan synthesis. The polypeptide is Cell wall synthesis protein KRE9 (Saccharomyces cerevisiae (strain ATCC 204508 / S288c) (Baker's yeast)).